We begin with the raw amino-acid sequence, 120 residues long: Large ribosomal subunit protein bL17 (120 aa).

It belongs to the bacterial ribosomal protein bL17 family. As to quaternary structure, part of the 50S ribosomal subunit. Contacts protein L32.

This Halalkalibacterium halodurans (strain ATCC BAA-125 / DSM 18197 / FERM 7344 / JCM 9153 / C-125) (Bacillus halodurans) protein is Large ribosomal subunit protein bL17.